The chain runs to 204 residues: High frequency lysogenization protein HflD homolog (204 aa).

Belongs to the HflD family.

It localises to the cytoplasm. The protein localises to the cell inner membrane. This Xylella fastidiosa (strain M23) protein is High frequency lysogenization protein HflD homolog.